Here is a 354-residue protein sequence, read N- to C-terminus: Dual-specificity RNA methyltransferase RlmN (354 aa).

Residue E89 is the Proton acceptor of the active site. Residues 106 to 339 enclose the Radical SAM core domain; it reads KEAKYTVCVS…CTIRKSKGMD (234 aa). C113 and C344 are oxidised to a cystine. Residues C120, C124, and C127 each coordinate [4Fe-4S] cluster. S-adenosyl-L-methionine is bound by residues 170–171, S202, 225–227, and N301; these read GE and SLH. C344 (S-methylcysteine intermediate) is an active-site residue.

The protein belongs to the radical SAM superfamily. RlmN family. It depends on [4Fe-4S] cluster as a cofactor.

The protein resides in the cytoplasm. The enzyme catalyses adenosine(2503) in 23S rRNA + 2 reduced [2Fe-2S]-[ferredoxin] + 2 S-adenosyl-L-methionine = 2-methyladenosine(2503) in 23S rRNA + 5'-deoxyadenosine + L-methionine + 2 oxidized [2Fe-2S]-[ferredoxin] + S-adenosyl-L-homocysteine. It catalyses the reaction adenosine(37) in tRNA + 2 reduced [2Fe-2S]-[ferredoxin] + 2 S-adenosyl-L-methionine = 2-methyladenosine(37) in tRNA + 5'-deoxyadenosine + L-methionine + 2 oxidized [2Fe-2S]-[ferredoxin] + S-adenosyl-L-homocysteine. In terms of biological role, specifically methylates position 2 of adenine 2503 in 23S rRNA and position 2 of adenine 37 in tRNAs. m2A2503 modification seems to play a crucial role in the proofreading step occurring at the peptidyl transferase center and thus would serve to optimize ribosomal fidelity. In Nautilia profundicola (strain ATCC BAA-1463 / DSM 18972 / AmH), this protein is Dual-specificity RNA methyltransferase RlmN.